The sequence spans 560 residues: MELILYVCKKVNIMENISQPQLPMGVSFLNVAHTYVPNTKVECHYTIPFGMKSSTRDWIGIFKVNTSSIRDYETFVWAVPPENAGERSISHCSVQFQAYYLPHPGEQQYHFRYVDQCGSVRGCSEAFVFGEPQPMEEMVTLEDEDSCLDMLLIVPKATFLQNQLEMAQKERNDLMRARLALEEEVISKEKRICYLEAALDISEKTCFSLKEQCEDLVTREQIAIGERNLLNCQEAELRERILQLESEIQSMNKKMQENDRVLEGTVAIKFSLETEKGELKQRLGETTVEIERYQLQVDSLREKLRSSQDMLSSSQQKALLMGEELASMSSIRDCTISDLHKSRLETADLAIKVSDLSVKFKEGMGQWWQEKTALNHSMEAKRDQIVNLKAEKLSLDNSLQEERSQRHALQCKLNQETDARQVQLSENRRELSELKSALKVTQMEKEQLIEERQEIHQYVRRLEERLDKLADEKWKEDKMLMEDKTDSSPPTLSVDLSDSDDESPGDEGVSQQLGPCSLDEQDLSLNLPVFPCEPQKVVINQPAPIACQLQPLPEDNPDSW.

Coiled-coil stretches lie at residues 156-192 and 367-480; these read KATF…EKRI and WWQE…DKML. The tract at residues 480–517 is disordered; it reads LMEDKTDSSPPTLSVDLSDSDDESPGDEGVSQQLGPCS. Over residues 487 to 496 the composition is skewed to low complexity; it reads SSPPTLSVDL.

Belongs to the CALCOCO family.

The protein resides in the cytoplasm. It localises to the nucleus. Functionally, may function as a coactivator for aryl hydrocarbon and nuclear receptors. The chain is Calcium-binding and coiled-coil domain-containing protein 1-A (calcoco1-a) from Xenopus laevis (African clawed frog).